Here is a 1040-residue protein sequence, read N- to C-terminus: Beta-galactosidase (1040 aa).

Residues asparagine 111 and aspartate 210 each coordinate substrate. Aspartate 210 serves as a coordination point for Na(+). Glutamate 427, histidine 429, and glutamate 472 together coordinate Mg(2+). Residues glutamate 472 and glutamate 548–histidine 551 each bind substrate. Glutamate 472 (proton donor) is an active-site residue. Glutamate 548 acts as the Nucleophile in catalysis. Mg(2+) is bound at residue asparagine 608. Na(+) is bound by residues phenylalanine 612 and aspartate 615. 2 residues coordinate substrate: aspartate 615 and tryptophan 1016.

Belongs to the glycosyl hydrolase 2 family. In terms of assembly, homotetramer. It depends on Mg(2+) as a cofactor. The cofactor is Na(+).

The catalysed reaction is Hydrolysis of terminal non-reducing beta-D-galactose residues in beta-D-galactosides.. This is Beta-galactosidase from Pectobacterium atrosepticum (strain SCRI 1043 / ATCC BAA-672) (Erwinia carotovora subsp. atroseptica).